Reading from the N-terminus, the 152-residue chain is Lipoprotein signal peptidase (152 aa).

A run of 3 helical transmembrane segments spans residues 5–25 (LFVL…FWIV), 61–81 (WFFV…LATH), and 84–104 (LNIW…GNFI). Catalysis depends on residues Asp114 and Asp130. Residues 125-145 (IFNVADSYLTVGVILLVICLW) form a helical membrane-spanning segment.

The protein belongs to the peptidase A8 family.

Its subcellular location is the cell membrane. The catalysed reaction is Release of signal peptides from bacterial membrane prolipoproteins. Hydrolyzes -Xaa-Yaa-Zaa-|-(S,diacylglyceryl)Cys-, in which Xaa is hydrophobic (preferably Leu), and Yaa (Ala or Ser) and Zaa (Gly or Ala) have small, neutral side chains.. It functions in the pathway protein modification; lipoprotein biosynthesis (signal peptide cleavage). Its function is as follows. This protein specifically catalyzes the removal of signal peptides from prolipoproteins. This chain is Lipoprotein signal peptidase, found in Streptococcus pyogenes serotype M3 (strain ATCC BAA-595 / MGAS315).